We begin with the raw amino-acid sequence, 195 residues long: Transcriptional regulator LdrP (195 aa).

An HTH crp-type domain is found at 110-182 (GELRARIARY…YRRVYLLDLA (73 aa)). A DNA-binding region (H-T-H motif) is located at residues 142–161 (HEEIADATASIRESVSKVLA).

As to quaternary structure, homodimer.

Its function is as follows. Activates transcription. Positively regulates PcrtB promoter upstream of the crtB operon in a cAMP-independent manner. Regulated genes include genes encoding DNA photolyase, phytoene synthase and cytochrome P450 monooxygenase, which are involved in carotenoid biosynthesis. Positively regulates the light-inducible gene cluster in the megaplasmid in a cAMP-independent manner. The sequence is that of Transcriptional regulator LdrP from Thermus thermophilus (strain ATCC 27634 / DSM 579 / HB8).